The primary structure comprises 205 residues: Ribosomal RNA small subunit methyltransferase G (205 aa).

S-adenosyl-L-methionine contacts are provided by residues Gly-66, Phe-71, 119–120 (IE), and Arg-135.

This sequence belongs to the methyltransferase superfamily. RNA methyltransferase RsmG family.

Its subcellular location is the cytoplasm. It catalyses the reaction guanosine(527) in 16S rRNA + S-adenosyl-L-methionine = N(7)-methylguanosine(527) in 16S rRNA + S-adenosyl-L-homocysteine. Its function is as follows. Specifically methylates the N7 position of guanine in position 527 of 16S rRNA. The polypeptide is Ribosomal RNA small subunit methyltransferase G (Rhizobium etli (strain CIAT 652)).